We begin with the raw amino-acid sequence, 331 residues long: Elongation factor Ts, mitochondrial (331 aa).

Residues 254–295 (SPLTVGEMPEVREEEGEKKDGDKQDEEERSTDSDEDETQMLR) are disordered. Basic and acidic residues predominate over residues 262-275 (PEVREEEGEKKDGD). Residues 276-291 (KQDEEERSTDSDEDET) show a composition bias toward acidic residues.

The protein belongs to the EF-Ts family.

Its subcellular location is the mitochondrion. Functionally, associates with the EF-Tu.GDP complex and induces the exchange of GDP to GTP. It remains bound to the aminoacyl-tRNA.EF-Tu.GTP complex up to the GTP hydrolysis stage on the ribosome. In Branchiostoma floridae (Florida lancelet), this protein is Elongation factor Ts, mitochondrial.